A 184-amino-acid polypeptide reads, in one-letter code: Large ribosomal subunit protein uL15 (184 aa).

Residues 1 to 50 (MDLSSLRPAKGAVKNKKRVGRGQGSGNGTTAGKGNKGQQARSGYKRPINE) form a disordered region. Residues 21 to 35 (RGQGSGNGTTAGKGN) are compositionally biased toward gly residues.

It belongs to the universal ribosomal protein uL15 family. In terms of assembly, part of the 50S ribosomal subunit.

Functionally, binds to the 23S rRNA. The chain is Large ribosomal subunit protein uL15 from Chlorobium luteolum (strain DSM 273 / BCRC 81028 / 2530) (Pelodictyon luteolum).